A 107-amino-acid polypeptide reads, in one-letter code: uncharacterized protein (107 aa).

This is an uncharacterized protein from Homo sapiens (Human).